We begin with the raw amino-acid sequence, 613 residues long: V-type proton ATPase catalytic subunit A isoform 2 (613 aa).

240-247 lines the ATP pocket; that stretch reads GAFGCGKT.

This sequence belongs to the ATPase alpha/beta chains family. In terms of assembly, V-ATPase is a heteromultimeric enzyme composed of a peripheral catalytic V1 complex (main components: subunits A, B, C, D, E, and F) attached to an integral membrane V0 proton pore complex (main component: the proteolipid protein).

The catalysed reaction is ATP + H2O + 4 H(+)(in) = ADP + phosphate + 5 H(+)(out). Catalytic subunit of the peripheral V1 complex of vacuolar ATPase. V-ATPase vacuolar ATPase is responsible for acidifying a variety of intracellular compartments in eukaryotic cells. In Acetabularia acetabulum (Mermaid's wine glass), this protein is V-type proton ATPase catalytic subunit A isoform 2.